A 143-amino-acid polypeptide reads, in one-letter code: Turripeptide VIII-01 (143 aa).

A signal peptide spans 1 to 23 (MALSLDILMSVTMVTAVLTTVNA). Positions 24-32 (EYKDSRLDS) are excised as a propeptide.

Post-translationally, contains 4 disulfide bonds. Expressed by the venom duct.

The protein localises to the secreted. In Gemmula speciosa (Splendid gem-turris), this protein is Turripeptide VIII-01.